The following is a 225-amino-acid chain: Uracil-DNA glycosylase (225 aa).

D65 acts as the Proton acceptor in catalysis.

Belongs to the uracil-DNA glycosylase (UDG) superfamily. UNG family.

The protein localises to the cytoplasm. It catalyses the reaction Hydrolyzes single-stranded DNA or mismatched double-stranded DNA and polynucleotides, releasing free uracil.. In terms of biological role, excises uracil residues from the DNA which can arise as a result of misincorporation of dUMP residues by DNA polymerase or due to deamination of cytosine. This is Uracil-DNA glycosylase from Bacillus anthracis (strain A0248).